The primary structure comprises 998 residues: Regulator of telomere elongation helicase 1 homolog (998 aa).

Residues 7–324 (AGIPVHFPFE…KEMLLELEKA (318 aa)) enclose the Helicase ATP-binding domain. Residue 42-49 (SPTGTGKT) participates in ATP binding. 4 residues coordinate [4Fe-4S] cluster: C148, C166, C175, and C211. A DEAH box motif is present at residues 254–257 (DEAH). The interval 426–454 (QNAGKPAPKQQQQGGWLGKGNNTSNSSSS) is disordered. The residue at position 887 (T887) is a Phosphothreonine.

This sequence belongs to the helicase family. RAD3/XPD subfamily.

Its subcellular location is the nucleus. The catalysed reaction is ATP + H2O = ADP + phosphate + H(+). Functionally, a probable ATP-dependent DNA helicase implicated in DNA repair and the maintenance of genomic stability. Acts as an anti-recombinase to counteract toxic recombination and limit crossover during meiosis. Regulates meiotic recombination and crossover homeostasis by physically dissociating strand invasion events and thereby promotes noncrossover repair by meiotic synthesis dependent strand annealing (SDSA) as well as disassembly of D loop recombination intermediates. This Drosophila willistoni (Fruit fly) protein is Regulator of telomere elongation helicase 1 homolog.